A 777-amino-acid polypeptide reads, in one-letter code: Ribosome-releasing factor 2, mitochondrial (777 aa).

The 286-residue stretch at 68-353 (AKIRNIGIMA…AITMYLPSPE (286 aa)) folds into the tr-type G domain. Residues 77-84 (AHIDAGKT), 141-145 (DTPGH), and 195-198 (NKMD) each bind GTP.

It belongs to the TRAFAC class translation factor GTPase superfamily. Classic translation factor GTPase family. EF-G/EF-2 subfamily.

The protein localises to the mitochondrion. The enzyme catalyses GTP + H2O = GDP + phosphate + H(+). Functionally, mitochondrial GTPase that mediates the disassembly of ribosomes from messenger RNA at the termination of mitochondrial protein biosynthesis. Acts in collaboration with MRRF. GTP hydrolysis follows the ribosome disassembly and probably occurs on the ribosome large subunit. Not involved in the GTP-dependent ribosomal translocation step during translation elongation. This is Ribosome-releasing factor 2, mitochondrial from Bos taurus (Bovine).